We begin with the raw amino-acid sequence, 647 residues long: MARNLCRNVQTTPRPLTALSLRRMVTPFHDLELQGSHCPRPRYFGSSTAKSAKKKSNNKAYSGSSMSAGDASAGPSRYPPLPEGWQAVIGIECHVQIKDKHKLFSTAELPTPSTPPNTLVTAFDAAHPGTLPTLNRSALRLAARTALSLNCQIHAESRFDRKHYFYSDLPAGYQITQKYMPLANNGQIKLLFDEGHLPSPEDEITVEIEQLQLEQDTAKSSYFDIGTTFRLDQASLADASNAEASPGAILHETDDDRVDRSFVDLNRAGAALMEIVSGPQMRTPEQAGAYVRKLQQLVRRIGASDGNMQEGSLRCDVNVSVNRIGEPFGTRCEVKNLNSVRFMMNAISFESHRQVKLLQQNGRVEQETRGYNESDGTTFRLRGKEDAPDYRYMPDPNLPPILLSEQQLHELRHGLPELPDARRARLVEQYGLSSRDINVLMRVGSEDERDGRIATQSLDTHAQQQTSSDAVDYFEQVATGRSAQTALNWIIHELMKGLNARNLPFKEWYLPAEYLGQLIDLVEDGQVTGTTAKTVIADLLSSAQSGHDGKTCLSLAAVRALAQSSSSPVFDLLKQRGLLALNTKKDLMPLVESAMERLPDEVAQVRKGNLKVAMRIVGQVMKDANGRANAKLVHQTILEQLGPTSAP.

Residues 1–16 (MARNLCRNVQTTPRPL) constitute a mitochondrion transit peptide. Residues 39–77 (PRPRYFGSSTAKSAKKKSNNKAYSGSSMSAGDASAGPSR) are disordered. Residues 58-76 (NKAYSGSSMSAGDASAGPS) are compositionally biased toward low complexity.

The protein belongs to the GatB/GatE family. GatB subfamily. As to quaternary structure, subunit of the heterotrimeric GatCAB amidotransferase (AdT) complex, composed of A, B and C subunits.

It is found in the mitochondrion. The enzyme catalyses L-glutamyl-tRNA(Gln) + L-glutamine + ATP + H2O = L-glutaminyl-tRNA(Gln) + L-glutamate + ADP + phosphate + H(+). Functionally, allows the formation of correctly charged Gln-tRNA(Gln) through the transamidation of misacylated Glu-tRNA(Gln) in the mitochondria. The reaction takes place in the presence of glutamine and ATP through an activated gamma-phospho-Glu-tRNA(Gln). In Mycosarcoma maydis (Corn smut fungus), this protein is Glutamyl-tRNA(Gln) amidotransferase subunit B, mitochondrial.